A 105-amino-acid chain; its full sequence is ESAT-6-like protein EsxU (105 aa).

It belongs to the WXG100 family. CFP-10 subfamily. In terms of assembly, forms a tight 1:1 complex with EsxT. Complex formation results in induction of alpha-helical conformation and stability against chemical denaturation.

It is found in the secreted. The polypeptide is ESAT-6-like protein EsxU (Mycobacterium tuberculosis (strain ATCC 25618 / H37Rv)).